The following is a 1219-amino-acid chain: ATP-dependent helicase/nuclease subunit A (1219 aa).

One can recognise a UvrD-like helicase ATP-binding domain in the interval 12-477 (TRWTDNQWKS…IDLSQNFRSR (466 aa)). 33–40 (AAAGSGKT) contacts ATP. Residues 478–786 (EEVLTTTNYL…RMMTIHSSKG (309 aa)) form the UvrD-like helicase C-terminal domain. The tract at residues 997–1016 (PSKQSVSELKRQHETEQSDT) is disordered. The segment covering 1004-1016 (ELKRQHETEQSDT) has biased composition (basic and acidic residues).

The protein belongs to the helicase family. AddA subfamily. Heterodimer of AddA and AddB/RexB. Mg(2+) is required as a cofactor.

It carries out the reaction Couples ATP hydrolysis with the unwinding of duplex DNA by translocating in the 3'-5' direction.. It catalyses the reaction ATP + H2O = ADP + phosphate + H(+). Functionally, the heterodimer acts as both an ATP-dependent DNA helicase and an ATP-dependent, dual-direction single-stranded exonuclease. Recognizes the chi site generating a DNA molecule suitable for the initiation of homologous recombination. The AddA nuclease domain is required for chi fragment generation; this subunit has the helicase and 3' -&gt; 5' nuclease activities. The sequence is that of ATP-dependent helicase/nuclease subunit A from Staphylococcus saprophyticus subsp. saprophyticus (strain ATCC 15305 / DSM 20229 / NCIMB 8711 / NCTC 7292 / S-41).